Reading from the N-terminus, the 80-residue chain is Exodeoxyribonuclease 7 small subunit (80 aa).

This sequence belongs to the XseB family. As to quaternary structure, heterooligomer composed of large and small subunits.

The protein localises to the cytoplasm. It catalyses the reaction Exonucleolytic cleavage in either 5'- to 3'- or 3'- to 5'-direction to yield nucleoside 5'-phosphates.. In terms of biological role, bidirectionally degrades single-stranded DNA into large acid-insoluble oligonucleotides, which are then degraded further into small acid-soluble oligonucleotides. This chain is Exodeoxyribonuclease 7 small subunit, found in Photobacterium profundum (strain SS9).